The chain runs to 882 residues: Cutinase transcription factor 1 beta (882 aa).

Over residues 1–20 (MNAETPEGSAAPPSPASTSA) the composition is skewed to low complexity. Residues 1–49 (MNAETPEGSAAPPSPASTSAKTVTDKTNKKRASPSGDSEQPTKVTKRRA) form a disordered region. Residues 53–81 (CVSCRARKVRCDVVEGAPCGNCRWDNVEC) constitute a DNA-binding region (zn(2)-C6 fungal-type). Residues 117-148 (NPMGMSTADLRRPSSGSAISTSSIDGPSSFLS) are disordered. A compositionally biased stretch (low complexity) spans 130–139 (SSGSAISTSS).

It is found in the nucleus. This chain is Cutinase transcription factor 1 beta (CTF1-BETA), found in Fusarium vanettenii (Neocosmospora pisi).